The primary structure comprises 82 residues: MMVSIIVPSLVKESSRESLLATTIDNSTLSTTPSPKLPTLEISGGSAKEIWTKIDQNTAPSTPSKILPKRLPSQSNLNNNNN.

A compositionally biased stretch (polar residues) spans 55 to 64 (DQNTAPSTPS). A disordered region spans residues 55-82 (DQNTAPSTPSKILPKRLPSQSNLNNNNN).

This is an uncharacterized protein from Dictyostelium discoideum (Social amoeba).